The chain runs to 470 residues: Cysteine--tRNA ligase (470 aa).

Residue Cys-46 participates in Zn(2+) binding. A 'HIGH' region motif is present at residues 48–58; it reads PTVYDLAHIGN. Zn(2+) contacts are provided by Cys-230, His-255, and Glu-259. Residues 288 to 292 carry the 'KMSKS' region motif; it reads KMSKS. Residue Lys-291 participates in ATP binding.

It belongs to the class-I aminoacyl-tRNA synthetase family. In terms of assembly, monomer. Zn(2+) serves as cofactor.

The protein resides in the cytoplasm. It carries out the reaction tRNA(Cys) + L-cysteine + ATP = L-cysteinyl-tRNA(Cys) + AMP + diphosphate. This is Cysteine--tRNA ligase from Granulibacter bethesdensis (strain ATCC BAA-1260 / CGDNIH1).